The sequence spans 1415 residues: G8 domain-containing protein DDB_G0278975 (1415 aa).

An N-terminal signal peptide occupies residues M1 to A24. Helical transmembrane passes span I107–T127 and L138–I158. N-linked (GlcNAc...) asparagine glycosylation is found at N245, N366, N428, N466, and N579. The G8 domain occupies S566 to A692. 2 PbH1 repeats span residues L819–G841 and T842–D864. N-linked (GlcNAc...) asparagine glycans are attached at residues N844, N985, N1009, N1023, N1099, N1244, and N1342.

The protein belongs to the comF family.

Its subcellular location is the membrane. The chain is G8 domain-containing protein DDB_G0278975 from Dictyostelium discoideum (Social amoeba).